A 156-amino-acid polypeptide reads, in one-letter code: Snaclec alboaggregin-B subunit alpha (156 aa).

The N-terminal stretch at methionine 1–alanine 23 is a signal peptide. The C-type lectin domain occupies aspartate 24–lysine 151. Cystine bridges form between cysteine 25–cysteine 36, cysteine 53–cysteine 150, and cysteine 125–cysteine 142.

Belongs to the snaclec family. As to quaternary structure, heterodimer of subunits alpha and beta; disulfide-linked. As to expression, expressed by the venom gland.

The protein localises to the secreted. In terms of biological role, weakly agglutinates platelets at high doses by binding to GPIbalpha (GP1BA). The protein is Snaclec alboaggregin-B subunit alpha of Trimeresurus albolabris (White-lipped pit viper).